An 847-amino-acid polypeptide reads, in one-letter code: Ras GTPase-activating protein 2 (847 aa).

Residues 1 to 21 (MAAAAPAAAASPEAPAVSGSA) are compositionally biased toward low complexity. Positions 1-31 (MAAAAPAAAASPEAPAVSGSADPETGDEDSR) are disordered. A2 carries the post-translational modification N-acetylalanine. C2 domains are found at residues 19-137 (GSAD…ETWF) and 148-288 (VQGK…QAWY). The 218-residue stretch at 371–588 (NKLVPFITAV…TDVKKFLDEI (218 aa)) folds into the Ras-GAP domain. Position 554 is a phosphoserine (S554). One can recognise a PH domain in the interval 603–704 (VHLKEGEMYK…WIDVLCRVSR (102 aa)). The segment at 706 to 742 (NHNRLSSFHPSAYLNGNWLCCQETSESTPGCKPCTAG) adopts a Btk-type zinc-finger fold. H714, C725, C726, and C736 together coordinate Zn(2+). The interval 819–847 (DEPHEKYRKKRSSSAKYGSKENPIVGKIS) is disordered.

Its subcellular location is the cell membrane. Inhibitory regulator of the Ras-cyclic AMP pathway. Binds inositol tetrakisphosphate (IP4) and phospholipids. The polypeptide is Ras GTPase-activating protein 2 (Rasa2) (Mus musculus (Mouse)).